Here is a 508-residue protein sequence, read N- to C-terminus: Cell death protein 3 (508 aa).

The propeptide occupies 1–223; that stretch reads MMRQDRRNLL…FHEEDMNYVD (223 aa). In terms of domain architecture, CARD spans 2 to 91; sequence MRQDRRNLLE…HELAAVLEPL (90 aa). 2 disordered regions span residues 106–130 and 148–184; these read PMSPASHRRSRALSPSTFSSPTRVH and YTRARSTSRSSRPLHASDRHNYVSPSNSFQSQPSSAN. The span at 118–127 shows a compositional bias: polar residues; that stretch reads LSPSTFSSPT. The span at 171 to 184 shows a compositional bias: low complexity; that stretch reads SPSNSFQSQPSSAN. Active-site residues include His317 and Cys360. The segment at 392 to 407 is required for interaction with ced-4; that stretch reads GPLFNFLGCVRPQAQQ.

This sequence belongs to the peptidase C14A family. As to quaternary structure, the active form is probably a heterodimer of the p17 subunit with either the p15 or p13 subunit which are all derived from the precursor by autocatalysis. Interacts with octameric ced-4 (two ced-3 zymogens per one ced-4 octamer); the interaction causes the autoproteolytic cleavage and activation of ced-3. Processed ced-3 also interacts with ced-4 octamer to form a stable holoenzyme. Interacts (via large subunit p17) with csp-3; the interaction prevents ced-3 autoactivation and delays ced-4-induced ced-3 processing. Interacts (via large subunit p17 or small subunit p13 or p15) with csp-2; the interaction inhibits ced-3 autoactivation. Interacts (via propeptide) with nucleoporin npp-14; the interaction tethers ced-3 to the nuclear membrane and prevents its autoprocessing in absence of ced-4. Interacts with dct-1. May form a complex composed of ced-3, ced-4 and mac-1. In terms of processing, autocatalytic cleavage removes the propeptide and generates the catalytic subunit p17 and two non-catalytic subunits p15 and p13; autoproteolysis is induced by ced-4 oligomer. Cleaved by caspase csp-1 probably at Asp-146 and Asp-376.

The protein resides in the nucleus membrane. Its subcellular location is the perikaryon. It is found in the synapse. The protein localises to the mitochondrion. It localises to the cytoplasm. The protein resides in the perinuclear region. It carries out the reaction Strict requirement for an Asp residue at position P1 and has a preferred cleavage sequence of Asp-Glu-Val-Asp-|-.. Octameric ced-4 activates zymogen autoprocessing and enhances activity of processed ced-3. Zymogen autoactivation is inhibited by csp-3. csp-3 has no effect on active ced-3. Zymogen autoactivation is inhibited by csp-2. Inhibited by cysteine protease inhibitor iodoacetic acid (CH3COOI). Inhibited by benzyloxycarbonyl-DEVD-fluoro-methyl ketone (zDEVD-fmk). Inhibited by benzyloxycarbonyl-VAD-fluoro-methyl ketone (zVAD-fmk). Not inhibited by N-[N-(L-3-transcarboxirane-2-carbonyl)-leucyl]-agmatine (E-64) or by the serine and cysteine protease inhibitor L-1-chloro-3-[4-to-osylamido]-7-amino-2-heptanone (TLCK). In terms of biological role, acts as a cysteine protease in controlling programmed cell death (apoptosis) by proteolytically activating or inactivating a wide range of substrates. Component of the egl-1, ced-9, ced-4 and ced-3 apoptotic signaling cascade required for the initiation of programmed cell death in cells fated to die during embryonic and postembryonic development. During oogenesis, required for germline apoptosis downstream of ced-9 and ced-4 but independently of egl-1. By cleaving and activating ced-8, promotes phosphatidylserine exposure on the surface of apoptotic cells; phosphatidylserine is a specific marker only present at the surface of apoptotic cells and acts as a specific signal for engulfment. By cleaving and converting dcr-1 into a deoxyribonuclease (DNase), promotes apoptotic chromosomal DNA fragmentation. By cleaving mitochondrial fission protein drp-1, may regulate the removal of mitochondria during apoptosis. During germline apoptosis, cleaves translation initiation factor ifg-1 (isoform p170) promoting cap-independent translation. During male tail morphogenesis, promotes apoptosis of the tail-spike cell downstream of ced-4 but independently of egl-1 and ced-9. By cleaving cnt-1, prevents the activation of the prosurvival akt-1/2 signaling pathway and thus promotes apoptosis. Downstream of ced-4, may play a role in sex-specific cell apoptosis by cleaving sex-determining protein fem-1. May regulate germline apoptosis in response to DNA damage, probably downstream of let-60/ras and mpk-1 pathway. Cleaves ced-9 in vitro. Cleaves csp-2 isoform b resulting in the removal of the propeptide and the generation of csp-2 subunit p31 in vitro. Independently of its apoptotic role has additional functions. Probably by cleaving and thereby activating actin-severing protein gsnl-1, required for the elimination of transient presynaptic components during larval development downstream of egl-1, ced-9 and ced-4 pathway. Together with ain-1, a component of the miRNA-induced-silencing complex (miRISC), regulates temporal cell fate patterning during larval development. Acts in cell fate patterning by cleaving heterochronic protein lin-28, likely promoting its degradation. Also cleaves heterochronic protein lin-14 and exonuclease disl-2 in vitro. Downstream of calreticulin crt-1 and ced-4 and independently of egl-1 and ced-9, plays a role in the initial steps of axonal regrowth following axotomy. Cleaves 14-3-3-like protein ftt-2, tubulin tbb-2 and calreticulin crt-1 in vitro. Plays also a role in resistance to S.typhimurium-mediated infection. This chain is Cell death protein 3, found in Caenorhabditis remanei (Caenorhabditis vulgaris).